Here is a 483-residue protein sequence, read N- to C-terminus: Putative inorganic phosphate cotransporter (483 aa).

Transmembrane regions (helical) follow at residues 64–84 (YILS…GILA), 90–110 (LRFL…VPVA), 187–207 (IFYV…IFVY), 292–312 (LPYL…DWMI), 349–369 (ALTL…YSGF), 383–403 (FLMS…PIAA), and 420–440 (IVFF…NIFG). The interval 447–483 (WDNPSEDEQKPALESSSTTNPPRLSNGSSAPRAISSS) is disordered. The segment covering 460 to 483 (ESSSTTNPPRLSNGSSAPRAISSS) has biased composition (polar residues).

Belongs to the major facilitator superfamily. Sodium/anion cotransporter family.

The protein localises to the membrane. Its function is as follows. May be an inorganic phosphate cotransporter. The chain is Putative inorganic phosphate cotransporter (Picot) from Drosophila ananassae (Fruit fly).